We begin with the raw amino-acid sequence, 451 residues long: MNQNKMLELINHLKNAGFVFQGSEIYGGVANTWDYGPLGVLLKDNILNYWKKFFVFSQNNIYMLDSKILLNSKVWEASGHVGNFNDPLIENKINNKRYRADKVIEELFPNENVAKMTHEQMQEFLQKNVTSYDNSKCAWSEIKKFNLMFETFQGVVDDKKKAIYLRPETAQGIFINFKNIQRAMRAKLPFGVAQVGKSFRNEVTPGNFIFRTREFEQMELEFFFDEETPNSYFDELVNKSYDFMLKLGLSKNNLKVRKHDQEELAHYSKATVDLEYNFPFGWGELMGIAHRGNFDLSTHSKFSNEKLEYLDPNTNKKLIPSVIEPSVGLDRLMLAILCEAYSEEKVSESDTRLVLKLDKKLSPYKVAILPLIKKFNPKANEIYSYLIDKNISVTFDESASIGKRYRRQDAIGTYYCLTVDEQSLEDNTVTLRDRDSMQQERINFKDILKFL.

Substrate contacts are provided by R99 and E168. Residues 200 to 202, 210 to 215, 284 to 285, and 328 to 331 each bind ATP; these read RNE, FRTREF, EL, and GLDR. 215–219 is a substrate binding site; it reads FEQME. 324–328 provides a ligand contact to substrate; the sequence is EPSVG.

It belongs to the class-II aminoacyl-tRNA synthetase family. As to quaternary structure, homodimer.

The protein resides in the cytoplasm. It catalyses the reaction tRNA(Gly) + glycine + ATP = glycyl-tRNA(Gly) + AMP + diphosphate. In terms of biological role, catalyzes the attachment of glycine to tRNA(Gly). This is Glycine--tRNA ligase from Mycoplasmopsis synoviae (strain 53) (Mycoplasma synoviae).